Here is a 281-residue protein sequence, read N- to C-terminus: Probable endonuclease 4 (281 aa).

Residues His-69, His-109, Glu-145, Asp-179, His-182, His-216, Asp-229, His-231, and Glu-261 each coordinate Zn(2+).

This sequence belongs to the AP endonuclease 2 family. Zn(2+) serves as cofactor.

The enzyme catalyses Endonucleolytic cleavage to 5'-phosphooligonucleotide end-products.. Functionally, endonuclease IV plays a role in DNA repair. It cleaves phosphodiester bonds at apurinic or apyrimidinic (AP) sites, generating a 3'-hydroxyl group and a 5'-terminal sugar phosphate. This chain is Probable endonuclease 4, found in Glaesserella parasuis serovar 5 (strain SH0165) (Haemophilus parasuis).